Here is a 387-residue protein sequence, read N- to C-terminus: Acetylajmalan esterase (387 aa).

The N-terminal stretch at 1–22 (MGFARLLHLVFSLLVFAGITNG) is a signal peptide. Catalysis depends on serine 36, which acts as the Nucleophile. N-linked (GlcNAc...) asparagine glycans are attached at residues asparagine 98, asparagine 180, asparagine 199, asparagine 249, and asparagine 296. Residues aspartate 337 and histidine 340 contribute to the active site.

The protein belongs to the 'GDSL' lipolytic enzyme family.

It carries out the reaction 17-O-acetylajmaline + H2O = ajmaline + acetate + H(+). It catalyses the reaction 17-O-acetylnorajmaline + H2O = norajmaline + acetate + H(+). Its pathway is alkaloid biosynthesis; ajmaline biosynthesis. Acetylesterase involved in the biosynthesis of ajmaline-type monoterpenoid indole alkaloids (MIAs) natural products, important plant-derived pharmaceuticals used in the therapy of heart disorders. Deacetylates 17-O-acetylajmaline and 17-O-acetylnorajmaline to produce ajmaline and norajmaline, but is inactive toward other acetylated alkaloids. The polypeptide is Acetylajmalan esterase (Rauvolfia serpentina (Serpentine wood)).